Reading from the N-terminus, the 731-residue chain is MRIGNLNVEIEFIADNIVRVLYYYGREAIVDNSLVVLPNLEKLSIKGESTGPSIISFSSESLSVDINTSNGELIMKDNKGGIVVKEKRRDLKFNEELSTYNVEQEFELSEGERVYGLGQHAGGNGLGQSSAYKLDYSGLSTTLSQRNTDIGIPFIVSSKGYGILWDNYSLGSISLRRNKLKVWFEAGKKIDYYVIYGDSIDDVIKGYRKLTGDAPLLPKWAYGYWQSKERYKSQDEITSVVKEFRERKIPLDVIVLDWRYWGKYGWNAFKFDETDFPRPKDMVEEIHKMGAKLAISIWPTFGKETEVFKDMESKGCIILGTTAFNPFKDECRELFWSYVKGFYDLGIDAYWLDASEPETGLGLVFFSPIHDVDLEIGKGYEYLNAYPLMETKAVYEGQRRISNKRVVILTRSAFAGQQRHSAISWSGDVLGDWATLRAQIPAGLNFSISGIPYWTTDTGGFFSGNPETKAYAEIFVRWFQWSTFCPILRVHGTIFPKEPWRFPREYQEVILKYIRLRYKLLPYIYSLAWMTYSIGYTIMRPLVMDFRDDQNVYDFDEQYMFGPYILISPVTLPSIIEKEVYLPSKEYWYDFWTGEKLEGGRMMDVKVTLDTIPLFVRSGAVLPLLGKNVNNAEEYWDVIDLRVYPGKNGYFELYDDDGITYEYEKGKYYIIPITWDEDKQELTIGKKRGELEMSKKIIKIIWVEKGKGIEHTKPDVEIEYNGKETITVKRG.

Residues D353 and E356 contribute to the active site. The Proton donor role is filled by D428.

Belongs to the glycosyl hydrolase 31 family. As to quaternary structure, monomer.

The enzyme catalyses Hydrolysis of terminal, non-reducing alpha-D-xylose residues with release of alpha-D-xylose.. Catalyzes the liberation of alpha-xylose from the non-reducing terminal glucose of xyloglucan oligosaccharides. Has high hydrolytic activity on the disaccharide isoprimeverose. Follows a retaining mechanism of substrate hydrolysis. This chain is Alpha-xylosidase (xylS), found in Saccharolobus solfataricus (strain ATCC 35092 / DSM 1617 / JCM 11322 / P2) (Sulfolobus solfataricus).